The chain runs to 330 residues: MSATPIIHLRDVKKRTGVLNAWERVRNKPQVHWAMECFAEALGVFFYVYFGLGSTAAWVIGNILKQSGLSSVFQIGFAYAFGILFAIGVCAATSGGHFNPCVTIAFTIFRGFPPLKAVRYIVAQILGAYIASALVYNQWKVLIVESELLLKQAGVYETTMFTPNGPAGIFALYLLPGAQTLPRAFLNEFVNCFVLALVIWAALDPTSFMIPPVMAPFIIAAAYAGSIWGYAVPAISLNSARDIGCRLFALTIWGKSAAGGSYSAITALVNIPATLLAAVVYELFLVDSDRVVAGSHLEFMNVAANHRRHRHQAEDDNHGDADDSSQEKPV.

The Cytoplasmic segment spans residues 1–40; it reads MSATPIIHLRDVKKRTGVLNAWERVRNKPQVHWAMECFAE. Residues 41–61 traverse the membrane as a helical segment; that stretch reads ALGVFFYVYFGLGSTAAWVIG. Residues 62-71 are Extracellular-facing; the sequence is NILKQSGLSS. Residues 72–92 form a helical membrane-spanning segment; the sequence is VFQIGFAYAFGILFAIGVCAA. Residues 93–124 are Cytoplasmic-facing; the sequence is TSGGHFNPCVTIAFTIFRGFPPLKAVRYIVAQ. Residues 99–101 carry the NPA 1 motif; it reads NPC. The chain crosses the membrane as a helical span at residues 125–145; the sequence is ILGAYIASALVYNQWKVLIVE. Residues 146–157 lie on the Extracellular side of the membrane; sequence SELLLKQAGVYE. A helical membrane pass occupies residues 158–178; the sequence is TTMFTPNGPAGIFALYLLPGA. Topologically, residues 179 to 183 are cytoplasmic; sequence QTLPR. A helical membrane pass occupies residues 184 to 204; sequence AFLNEFVNCFVLALVIWAALD. Residues 205-207 are Extracellular-facing; sequence PTS. Residues 208–228 form a helical membrane-spanning segment; it reads FMIPPVMAPFIIAAAYAGSIW. Over 229–264 the chain is Cytoplasmic; it reads GYAVPAISLNSARDIGCRLFALTIWGKSAAGGSYSA. Positions 238 to 240 match the NPA 2 motif; the sequence is NSA. A helical membrane pass occupies residues 265 to 285; the sequence is ITALVNIPATLLAAVVYELFL. At 286–330 the chain is on the extracellular side; the sequence is VDSDRVVAGSHLEFMNVAANHRRHRHQAEDDNHGDADDSSQEKPV. The disordered stretch occupies residues 308-330; the sequence is RHRHQAEDDNHGDADDSSQEKPV. The span at 312–330 shows a compositional bias: basic and acidic residues; the sequence is QAEDDNHGDADDSSQEKPV.

It belongs to the MIP/aquaporin (TC 1.A.8) family.

Its subcellular location is the membrane. Its function is as follows. Water channel-like protein that does not show transport of water nor ammonium across membranes. This chain is Aquaporin Lacbi1:307192, found in Laccaria bicolor (strain S238N-H82 / ATCC MYA-4686) (Bicoloured deceiver).